A 468-amino-acid chain; its full sequence is Acid phosphatase PHO1 (468 aa).

The signal sequence occupies residues 1-22 (MFSPILSLEIILALATLQSVFA). The Nucleophile role is filled by histidine 84. 4 N-linked (GlcNAc...) asparagine glycosylation sites follow: asparagine 163, asparagine 196, asparagine 256, and asparagine 321. Aspartate 346 serves as the catalytic Proton donor. N-linked (GlcNAc...) asparagine glycosylation is found at asparagine 360 and asparagine 453.

Belongs to the histidine acid phosphatase family.

The catalysed reaction is a phosphate monoester + H2O = an alcohol + phosphate. The sequence is that of Acid phosphatase PHO1 (PHO1) from Komagataella pastoris (Yeast).